We begin with the raw amino-acid sequence, 124 residues long: Apolipoprotein C-IV (124 aa).

A signal peptide spans 1–27 (MLLPRRGLRTLPSLCLYILVLVWVVAC).

The protein belongs to the apolipoprotein C4 family. Glycosylated; contains sialic acid. Present in up to five sialylated isoforms. Blood plasma, associated primarily with VLDL and HDL. Expressed mainly in the liver.

The protein resides in the secreted. Its function is as follows. May participate in lipoprotein metabolism. The chain is Apolipoprotein C-IV (APOC4) from Oryctolagus cuniculus (Rabbit).